The sequence spans 386 residues: Patatin-2-Kuras 3 (386 aa).

An N-terminal signal peptide occupies residues 1-23; that stretch reads MATTKSVLVLFFMILATTSSTCA. The PNPLA domain maps to 32–229; it reads LSIDGGGIKG…TVGDPALLSL (198 aa). The GXGXXG signature appears at 36 to 41; the sequence is GGGIKG. The GXSXG signature appears at 75–79; it reads GTSTG. S77 serves as the catalytic Nucleophile. Residue N115 is glycosylated (N-linked (GlcNAc...) asparagine). Catalysis depends on D215, which acts as the Proton acceptor. The DGA/G signature appears at 215–217; sequence DGA. Positions 321–384 form a coiled coil; that stretch reads ENALTGTTTE…DRKKLRANKA (64 aa).

The protein belongs to the patatin family. As to expression, tuber.

The protein localises to the vacuole. Probable lipolytic acyl hydrolase (LAH), an activity which is thought to be involved in the response of tubers to pathogens. This is Patatin-2-Kuras 3 (pat2-k3) from Solanum tuberosum (Potato).